The chain runs to 406 residues: Cysteine desulfurase (406 aa).

K226 bears the N6-(pyridoxal phosphate)lysine mark. Residue C364 is the Cysteine persulfide intermediate of the active site.

The protein belongs to the class-V pyridoxal-phosphate-dependent aminotransferase family. Csd subfamily. Homodimer. Interacts with SufE and the SufBCD complex composed of SufB, SufC and SufD. The interaction with SufE is required to mediate the direct transfer of the sulfur atom from the S-sulfanylcysteine. It depends on pyridoxal 5'-phosphate as a cofactor.

It is found in the cytoplasm. The catalysed reaction is (sulfur carrier)-H + L-cysteine = (sulfur carrier)-SH + L-alanine. It carries out the reaction L-selenocysteine + AH2 = hydrogenselenide + L-alanine + A + H(+). It participates in cofactor biosynthesis; iron-sulfur cluster biosynthesis. Functionally, cysteine desulfurases mobilize the sulfur from L-cysteine to yield L-alanine, an essential step in sulfur metabolism for biosynthesis of a variety of sulfur-containing biomolecules. Component of the suf operon, which is activated and required under specific conditions such as oxidative stress and iron limitation. Acts as a potent selenocysteine lyase in vitro, that mobilizes selenium from L-selenocysteine. Selenocysteine lyase activity is however unsure in vivo. This is Cysteine desulfurase from Escherichia coli O9:H4 (strain HS).